Here is a 446-residue protein sequence, read N- to C-terminus: Tubulin alpha chain-like 3 (446 aa).

Residues 1–4 (MREC) carry the MREC motif motif. Positions 11, 78, 147, 151, 152, 186, 213, and 235 each coordinate GTP. A Mg(2+)-binding site is contributed by glutamate 78. The active site involves glutamate 261.

Belongs to the tubulin family. Dimer of alpha and beta chains. A typical microtubule is a hollow water-filled tube with an outer diameter of 25 nm and an inner diameter of 15 nM. Alpha-beta heterodimers associate head-to-tail to form protofilaments running lengthwise along the microtubule wall with the beta-tubulin subunit facing the microtubule plus end conferring a structural polarity. Microtubules usually have 13 protofilaments but different protofilament numbers can be found in some organisms and specialized cells. It depends on Mg(2+) as a cofactor. In terms of processing, some glutamate residues at the C-terminus are polyglycylated, resulting in polyglycine chains on the gamma-carboxyl group. Glycylation is mainly limited to tubulin incorporated into axonemes (cilia and flagella) whereas glutamylation is prevalent in neuronal cells, centrioles, axonemes, and the mitotic spindle. Both modifications can coexist on the same protein on adjacent residues, and lowering polyglycylation levels increases polyglutamylation, and reciprocally. Cilia and flagella glycylation is required for their stability and maintenance. Flagella glycylation controls sperm motility. Some glutamate residues at the C-terminus are polyglutamylated, resulting in polyglutamate chains on the gamma-carboxyl group. Polyglutamylation plays a key role in microtubule severing by spastin (SPAST). SPAST preferentially recognizes and acts on microtubules decorated with short polyglutamate tails: severing activity by SPAST increases as the number of glutamates per tubulin rises from one to eight, but decreases beyond this glutamylation threshold. Glutamylation is also involved in cilia motility.

It is found in the cytoplasm. The protein localises to the cytoskeleton. The enzyme catalyses GTP + H2O = GDP + phosphate + H(+). Tubulin is the major constituent of microtubules, a cylinder consisting of laterally associated linear protofilaments composed of alpha- and beta-tubulin heterodimers. Microtubules grow by the addition of GTP-tubulin dimers to the microtubule end, where a stabilizing cap forms. Below the cap, tubulin dimers are in GDP-bound state, owing to GTPase activity of alpha-tubulin. This Mus musculus (Mouse) protein is Tubulin alpha chain-like 3 (Tubal3).